Reading from the N-terminus, the 120-residue chain is Large ribosomal subunit protein eL18 (120 aa).

Belongs to the eukaryotic ribosomal protein eL18 family.

The sequence is that of Large ribosomal subunit protein eL18 from Pyrococcus horikoshii (strain ATCC 700860 / DSM 12428 / JCM 9974 / NBRC 100139 / OT-3).